The sequence spans 169 residues: MQDAITAILNRYDLTGRYLDKAAVTQLESFFSSGLDRIKIAEIINNQATNILKEASAQLYEEQPELLRPGGNSYTTRRYAACLRDIEYYLRYTSYALIAGNTNILDQRVLNGLKDTYNSLSVPLAPTVRSIQLLQEIIEEELELQSITRKDIVQEPFQHLINALSEQDL.

Residue Asn72 is modified to N4-methylasparagine. Cys82 provides a ligand contact to (2R,3E)-phycocyanobilin.

It belongs to the phycobiliprotein family. In terms of assembly, heterodimer of an alpha and a beta chain. Contains one covalently linked bilin chromophore.

It localises to the plastid. The protein localises to the chloroplast thylakoid membrane. Light-harvesting photosynthetic bile pigment-protein from the phycobiliprotein complex. Allophycocyanin has a maximum absorption at approximately 650 nanometers. The sequence is that of Allophycocyanin subunit beta-18 (apcF) from Porphyra purpurea (Red seaweed).